A 28-amino-acid chain; its full sequence is M-ectatotoxin-Eb2c (28 aa).

As to expression, expressed by the venom gland.

It is found in the secreted. Its function is as follows. Antimicrobial peptide active against Gram-negative bacterium E.coli MH1 (MIC=3.5 uM) and P.aeruginosa PAO1 (MIC=10 uM) and against Gram-positive bacterium A.globiformis VKM Ac-1112 (MIC=1.25 uM). This chain is M-ectatotoxin-Eb2c, found in Ectatomma brunneum (Ant).